Here is a 286-residue protein sequence, read N- to C-terminus: Diaminopimelate epimerase (286 aa).

Substrate-binding residues include N22, Q56, and N76. C85 serves as the catalytic Proton donor. Substrate contacts are provided by residues 86 to 87, N169, N202, and 220 to 221; these read GN and ER. The active-site Proton acceptor is C229. Position 230–231 (230–231) interacts with substrate; the sequence is GS.

It belongs to the diaminopimelate epimerase family. Homodimer.

It localises to the cytoplasm. It catalyses the reaction (2S,6S)-2,6-diaminopimelate = meso-2,6-diaminopimelate. It participates in amino-acid biosynthesis; L-lysine biosynthesis via DAP pathway; DL-2,6-diaminopimelate from LL-2,6-diaminopimelate: step 1/1. Functionally, catalyzes the stereoinversion of LL-2,6-diaminopimelate (L,L-DAP) to meso-diaminopimelate (meso-DAP), a precursor of L-lysine and an essential component of the bacterial peptidoglycan. This Buchnera aphidicola subsp. Baizongia pistaciae (strain Bp) protein is Diaminopimelate epimerase.